The primary structure comprises 456 residues: Antigen Lp49 (456 aa).

Positions 1-34 (MNSNPKKKFLKLIKIKSDIILLIPIFLFLVCCKS) are cleaved as a signal peptide. Cys346 and Cys347 form a disulfide bridge.

The protein resides in the cell outer membrane. In terms of biological role, may be involved in virulence. Binds human plasminogen (PLG) and stimulates its proteolytic cleavage to enzymatically active plasmin in the presence of an urokinase-type PLG activator in vitro. Activated plasmin has proteolytic activity which may help the bacteria to spread throughout the host by degrading extracellular matrix components, facilitating tissue penetration and invasion. In Leptospira interrogans serogroup Icterohaemorrhagiae serovar copenhageni (strain Fiocruz L1-130), this protein is Antigen Lp49.